Here is a 529-residue protein sequence, read N- to C-terminus: Peptide chain release factor 3 (529 aa).

The 269-residue stretch at 11-279 (AKRRTFAIIS…GLVDWAPKPQ (269 aa)) folds into the tr-type G domain. GTP is bound by residues 20–27 (SHPDAGKT), 88–92 (DTPGH), and 142–145 (NKLD).

It belongs to the TRAFAC class translation factor GTPase superfamily. Classic translation factor GTPase family. PrfC subfamily.

Its subcellular location is the cytoplasm. Increases the formation of ribosomal termination complexes and stimulates activities of RF-1 and RF-2. It binds guanine nucleotides and has strong preference for UGA stop codons. It may interact directly with the ribosome. The stimulation of RF-1 and RF-2 is significantly reduced by GTP and GDP, but not by GMP. This Idiomarina loihiensis (strain ATCC BAA-735 / DSM 15497 / L2-TR) protein is Peptide chain release factor 3.